A 572-amino-acid chain; its full sequence is Phosphoglucomutase-2 (572 aa).

Substrate-binding positions include T23, R27, 126-127 (SH), and K140. S126 acts as the Phosphoserine intermediate in catalysis. Position 126 (S126) interacts with Mg(2+). Residues D308, D310, and D312 each contribute to the Mg(2+) site. Substrate-binding positions include 312-313 (DR), T373, 392-394 (EES), K405, and R527.

It belongs to the phosphohexose mutase family. Mg(2+) is required as a cofactor. Post-translationally, phosphorylated via a calcium-dependent protein kinase.

The protein resides in the cytoplasm. It carries out the reaction alpha-D-glucose 1-phosphate = alpha-D-glucose 6-phosphate. May be involved in membrane fusion in exocytosis. The sequence is that of Phosphoglucomutase-2 (pp63-2) from Paramecium tetraurelia.